The chain runs to 40 residues: Mastoparan-like peptide 12c (40 aa).

The signal sequence occupies residues 1–7 (MSAEALA). Residues 1–22 (MSAEALADPKADPLAGPNPDAD) are disordered. 4 AXPX repeats span residues 7-10 (ADPK), 11-14 (ADPL), 15-18 (AGPN), and 19-22 (PDAD). The propeptide occupies 8 to 25 (DPKADPLAGPNPDADPEA). Leu39 is modified (leucine amide).

This sequence belongs to the MCD family. Mastoparan subfamily. In terms of tissue distribution, expressed by the venom gland.

It is found in the secreted. In terms of biological role, shows mast cell degranulation and antimicrobial activities against the Gram-negative bacteria E.coli ATCC 25922 (MIC=6.0 ug/ml), the Gram-positive bacteria S.aureus ATCC 2592 (MIC=3.0 ug/ml) and the fungus C.albicans ATCC 2002 (MIC=12 ug/ml). Exhibits little hemolytic activity against washed human erythrocytes. Its mast cell degranulation activity may be related to the activation of G-protein coupled receptors in mast cells as well as interaction with other proteins located in cell endosomal membranes in the mast cells. The chain is Mastoparan-like peptide 12c from Vespa magnifica (Hornet).